A 183-amino-acid chain; its full sequence is Inner membrane-spanning protein YciB (183 aa).

The next 5 membrane-spanning stretches (helical) occupy residues 22 to 44 (IYTATGALVVVTGLQLIYSWVRY), 54 to 74 (TFLLVGFFGGLTVFFHDDAFI), 76 to 96 (WKVTVINILFALGLLISRYGF), 119 to 139 (VNLAWVGFFTVCGLLNLYVAF), and 149 to 169 (FKVFGLLGMTLVFTLLSGVYL).

It belongs to the YciB family.

The protein localises to the cell inner membrane. In terms of biological role, plays a role in cell envelope biogenesis, maintenance of cell envelope integrity and membrane homeostasis. The protein is Inner membrane-spanning protein YciB of Aeromonas salmonicida (strain A449).